A 498-amino-acid chain; its full sequence is Peptidase inhibitor 16 (498 aa).

Residues 1–29 (MHGSCSPWVMLPPPLLLLLLLIATGPTTA) form the signal peptide. Residues 39 to 167 (VDLHNQYRAQ…ANIHLLVCNY (129 aa)) enclose the SCP domain. The N-linked (GlcNAc...) asparagine glycan is linked to Asn116. 3 disordered regions span residues 204 to 277 (NPEK…GPSS), 317 to 407 (PKSM…SPLS), and 419 to 467 (ERGG…ENPE). Polar residues-rich tracts occupy residues 218 to 277 (VPST…GPSS) and 344 to 353 (LTESGESVPQ). A compositionally biased stretch (low complexity) spans 367-380 (PEAILPEAEAAPTE). The span at 383–397 (VELREPEAESPKAES) shows a compositional bias: basic and acidic residues. The segment covering 437–447 (SLPTFPSASGN) has biased composition (polar residues). An N-linked (GlcNAc...) asparagine glycan is attached at Asn447.

The protein belongs to the CRISP family. Interacts with PSP94/MSMB. Post-translationally, N-glycosylated. As to expression, expressed strongly in aorta and skin, and weakly in adipose tissue (at protein level). In heart, found in the extracellular space surrounding cardiomyocytes (at protein level).

It is found in the secreted. In terms of biological role, may inhibit cardiomyocyte growth. This is Peptidase inhibitor 16 (Pi16) from Mus musculus (Mouse).